Here is a 553-residue protein sequence, read N- to C-terminus: Chaperonin GroEL (553 aa).

ATP-binding positions include 29 to 32, K50, 86 to 90, G424, and D504; these read TLGP and DGTTT.

The protein belongs to the chaperonin (HSP60) family. Forms a cylinder of 14 subunits composed of two heptameric rings stacked back-to-back. Interacts with the co-chaperonin GroES.

It localises to the cytoplasm. The enzyme catalyses ATP + H2O + a folded polypeptide = ADP + phosphate + an unfolded polypeptide.. Its function is as follows. Together with its co-chaperonin GroES, plays an essential role in assisting protein folding. The GroEL-GroES system forms a nano-cage that allows encapsulation of the non-native substrate proteins and provides a physical environment optimized to promote and accelerate protein folding. This is Chaperonin GroEL from Koribacter versatilis (strain Ellin345).